A 742-amino-acid polypeptide reads, in one-letter code: Glucosylceramidase (742 aa).

N-linked (GlcNAc...) asparagine glycans are attached at residues asparagine 37 and asparagine 160. The active-site Proton donor is glutamate 258. Residue asparagine 388 is glycosylated (N-linked (GlcNAc...) asparagine). Glutamate 492 (nucleophile) is an active-site residue. Asparagine 552, asparagine 560, and asparagine 698 each carry an N-linked (GlcNAc...) asparagine glycan. The chain crosses the membrane as a helical span at residues 701–721 (IAQILVAVVILLLGVLVAYYA).

This sequence belongs to the glycosyl hydrolase 5 (cellulase A) family.

The protein localises to the membrane. It catalyses the reaction a beta-D-glucosyl-(1&lt;-&gt;1')-N-acylsphing-4-enine + H2O = an N-acylsphing-4-enine + D-glucose. In terms of biological role, specifically hydrolyzes the glucosidic linkage in glucosylceramide. May prevent accumulation of aberrent glucosylceramide containing immature ceramide. In Cryptococcus neoformans var. grubii serotype A (strain H99 / ATCC 208821 / CBS 10515 / FGSC 9487) (Filobasidiella neoformans var. grubii), this protein is Glucosylceramidase.